The following is a 341-amino-acid chain: Anthranilate phosphoribosyltransferase (341 aa).

5-phospho-alpha-D-ribose 1-diphosphate-binding positions include G81, 84–85 (GD), S89, 91–94 (NIST), 109–117 (KHGNRSASS), and S121. G81 lines the anthranilate pocket. Mg(2+) is bound at residue S93. N112 is a binding site for anthranilate. R167 is an anthranilate binding site. The Mg(2+) site is built by D225 and E226.

Belongs to the anthranilate phosphoribosyltransferase family. In terms of assembly, homodimer. It depends on Mg(2+) as a cofactor.

The enzyme catalyses N-(5-phospho-beta-D-ribosyl)anthranilate + diphosphate = 5-phospho-alpha-D-ribose 1-diphosphate + anthranilate. It functions in the pathway amino-acid biosynthesis; L-tryptophan biosynthesis; L-tryptophan from chorismate: step 2/5. Catalyzes the transfer of the phosphoribosyl group of 5-phosphorylribose-1-pyrophosphate (PRPP) to anthranilate to yield N-(5'-phosphoribosyl)-anthranilate (PRA). The protein is Anthranilate phosphoribosyltransferase of Nocardioides sp. (strain ATCC BAA-499 / JS614).